Reading from the N-terminus, the 160-residue chain is Cytochrome b6-f complex subunit 4 (160 aa).

The next 3 helical transmembrane spans lie at 36–56 (LLYV…ALAV), 95–115 (LLGV…PFIE), and 131–151 (TVFL…ALPL).

It belongs to the cytochrome b family. PetD subfamily. The 4 large subunits of the cytochrome b6-f complex are cytochrome b6, subunit IV (17 kDa polypeptide, PetD), cytochrome f and the Rieske protein, while the 4 small subunits are PetG, PetL, PetM and PetN. The complex functions as a dimer.

It localises to the cellular thylakoid membrane. Component of the cytochrome b6-f complex, which mediates electron transfer between photosystem II (PSII) and photosystem I (PSI), cyclic electron flow around PSI, and state transitions. The chain is Cytochrome b6-f complex subunit 4 from Desmonostoc sp. (strain PCC 7906) (Nostoc sp. (strain PCC 7906)).